We begin with the raw amino-acid sequence, 354 residues long: Probable alcohol acetyltransferase (354 aa).

Residues serine 124 and histidine 293 each act as charge relay system in the active site.

It belongs to the AB hydrolase superfamily.

Probable alcohol acetyltransferase that uses acetyl-CoA to synthesize acetate esters from various alcohols. Not involved in the synthesis of ethyl acetate. This chain is Probable alcohol acetyltransferase (EAT2), found in Cyberlindnera jadinii (strain ATCC 18201 / CBS 1600 / BCRC 20928 / JCM 3617 / NBRC 0987 / NRRL Y-1542) (Torula yeast).